A 326-amino-acid polypeptide reads, in one-letter code: tRNA-modifying protein YgfZ (326 aa).

The folate site is built by Trp27 and Trp189.

This sequence belongs to the tRNA-modifying YgfZ family.

The protein localises to the cytoplasm. Its function is as follows. Folate-binding protein involved in regulating the level of ATP-DnaA and in the modification of some tRNAs. It is probably a key factor in regulatory networks that act via tRNA modification, such as initiation of chromosomal replication. The chain is tRNA-modifying protein YgfZ from Salmonella paratyphi A (strain AKU_12601).